A 270-amino-acid chain; its full sequence is Tetraspanin-14 (270 aa).

Over 1 to 17 (MHYYRYSNAKVSCWYKY) the chain is Cytoplasmic. The chain crosses the membrane as a helical span at residues 18-38 (LLFSYNIIFWLAGVVFLGVGL). The Extracellular segment spans residues 39 to 61 (WAWSEKGVLSDLTKVTRMHGIDP). The helical transmembrane segment at 62–82 (VVLVLMVGVVMFTLGFAGCVG) threads the bilayer. The Cytoplasmic segment spans residues 83-92 (ALRENICLLN). Residues 93 to 113 (FFCGTIVLIFFLELAVAVLAF) form a helical membrane-spanning segment. Topologically, residues 114–232 (LFQDWVRDRF…QALESWLPRN (119 aa)) are extracellular. The segment at 114-232 (LFQDWVRDRF…QALESWLPRN (119 aa)) is necessary and sufficient for interaction with ADAM10. Disulfide bonds link C153–C221, C154–C186, C170–C180, and C187–C200. The N-linked (GlcNAc...) asparagine glycan is linked to N169. A helical membrane pass occupies residues 233 to 253 (IYIVAGVFIAISLLQIFGIFL). The Cytoplasmic segment spans residues 254 to 270 (ARTLISDIEAVKAGHHF).

The protein belongs to the tetraspanin (TM4SF) family. In terms of assembly, interacts with ADAM10; the interaction promotes ADAM10 maturation and cell surface expression.

It is found in the cell membrane. Part of TspanC8 subgroup, composed of 6 members that interact with the transmembrane metalloprotease ADAM10. This interaction is required for ADAM10 exit from the endoplasmic reticulum and for enzymatic maturation and trafficking to the cell surface as well as substrate specificity. Different TspanC8/ADAM10 complexes have distinct substrates. Negatively regulates ADAM10-mediated cleavage of GP6. Promotes ADAM10-mediated cleavage of CDH5. This Homo sapiens (Human) protein is Tetraspanin-14.